Consider the following 1901-residue polypeptide: A-kinase anchor protein 11 (1901 aa).

Phosphoserine occurs at positions 18, 422, 433, 444, and 448. Residues 407–443 form a disordered region; the sequence is ALPANVRKPTPRKPESPYGNLCDAPDSPRPVKASRED. Disordered regions lie at residues 843 to 864 and 971 to 993; these read NPGN…SSSK and LPVS…DSQN. T981 and T1100 each carry phosphothreonine. Residues 1131–1153 form a disordered region; the sequence is EFAPATPPSTPHNSSVGSLSENE. Over residues 1141–1153 the composition is skewed to polar residues; that stretch reads PHNSSVGSLSENE. Phosphoserine is present on residues S1171, S1176, S1177, S1242, and S1337. T1485 is subject to Phosphothreonine. S1580 is subject to Phosphoserine. Positions 1650-1663 are PKA-RII subunit binding domain; that stretch reads LAEKIVAEAIEKAE. A disordered region spans residues 1708 to 1805; it reads KEIEDFQSTE…HEDEVEGLGQ (98 aa). The span at 1713 to 1740 shows a compositional bias: polar residues; sequence FQSTESVSSQQMNLSIGDDSTGSWSNLS. Over residues 1747–1756 the composition is skewed to basic and acidic residues; sequence DESSSFHHLS. The span at 1757 to 1772 shows a compositional bias: low complexity; the sequence is ESNGNSSSWSSLGLEG. The span at 1787–1801 shows a compositional bias: acidic residues; the sequence is DGPDDKDEEHEDEVE.

This sequence belongs to the AKAP110 family. In terms of tissue distribution, expressed in heart, brain, lung, liver, kidney, testis and ovary. Weakly expressed in skeletal muscle, pancreas and spleen.

It is found in the cytoplasm. The protein resides in the cytoskeleton. Its subcellular location is the microtubule organizing center. The protein localises to the centrosome. Functionally, binds to type II regulatory subunits of protein kinase A and anchors/targets them. This Homo sapiens (Human) protein is A-kinase anchor protein 11 (AKAP11).